Reading from the N-terminus, the 956-residue chain is Bromodomain testis-specific protein (956 aa).

The Bromo 1 domain occupies 26 to 132; that stretch reads RLTNQLQFLQ…KLFMQKLSQM (107 aa). S186 carries the phosphoserine modification. A Nuclear localization signal motif is present at residues 208-219; that stretch reads KGVKRRADTTTP. A disordered region spans residues 210 to 239; the sequence is VKRRADTTTPTTSIAKASSESPPTLRETKP. Over residues 216–231 the composition is skewed to polar residues; it reads TTTPTTSIAKASSESP. In terms of domain architecture, Bromo 2 spans 266–375; sequence VKVTEQLKHC…DVFELHFAKI (110 aa). Disordered regions lie at residues 391 to 420, 442 to 508, 607 to 747, and 859 to 934; these read NSAQALSRESSSEASSGDASSEDSEDERVQ, VPLR…PMNY, NQLN…HSQQ, and LEHN…RREA. A compositionally biased stretch (low complexity) spans 392–409; sequence SAQALSRESSSEASSGDA. The stretch at 417–442 forms a coiled coil; the sequence is ERVQHLAKLQEQLNAVHQQLQVLSQV. Basic residues predominate over residues 445–463; the sequence is RKLKKKNEKSKRAPKRKKV. Positions 496-578 constitute an NET domain; that stretch reads KSEEEDNAKP…ACLRKRSLKP (83 aa). A compositionally biased stretch (pro residues) spans 625–640; that stretch reads PPPPPPPPPPPPPPPE. Residues 649 to 688 show a composition bias toward low complexity; it reads DSSSSSGSGSGSSSSSSGSSSSSSSSGSASSSSDSSSSDS. Residues 714–724 are compositionally biased toward polar residues; that stretch reads KQIQSSVQDIT. The stretch at 844–940 forms a coiled coil; that stretch reads EKEVKARTQE…RREAMAGTID (97 aa). Composition is skewed to basic and acidic residues over residues 859-874 and 915-934; these read LEHNAKDPKVSQENQR and LLKDRNLAREKEQERRRREA.

It belongs to the BET family. As to quaternary structure, interacts with SMARCE1. Interacts with mRNA splicing machinery proteins SRSF2, DDX5, HNRNPK and TARDBP. Interacts with the acetylated N-terminus of histone H1, H2, H3 and H4. Interacts with P-TEFb components CDK9 and CCNT1/cyclin-T1. In terms of processing, ubiquitinated in a SPOP-dependent manner, leading to proteasomal degradation. As to expression, testis-specific. Expressed in germinal cells from the early meiotic (pachytene) spermatocytes and during spermiogenesis in the round and elongating spermatids until the condensed late spermatids. No expression seen in spermatogonia.

It is found in the nucleus. Testis-specific chromatin protein that specifically binds histone H4 acetylated at 'Lys-5' and 'Lys-8' (H4K5ac and H4K8ac, respectively) and plays a key role in spermatogenesis. Required in late pachytene spermatocytes: plays a role in meiotic and post-meiotic cells by binding to acetylated histones at the promoter of specific meiotic and post-meiotic genes, facilitating their activation at the appropriate time. In the post-meiotic phase of spermatogenesis, binds to hyperacetylated histones and participates in their general removal from DNA. Also recognizes and binds a subset of butyrylated histones: able to bind histone H4 butyrylated at 'Lys-8' (H4K8ac), while it is not able to bind H4 butyrylated at 'Lys-5' (H4K5ac). Also acts as a component of the splicing machinery in pachytene spermatocytes and round spermatids and participates in 3'-UTR truncation of specific mRNAs in post-meiotic spermatids. Required for chromocenter organization, a structure comprised of peri-centromeric heterochromatin. This chain is Bromodomain testis-specific protein (Brdt), found in Mus musculus (Mouse).